A 236-amino-acid polypeptide reads, in one-letter code: (5-formylfuran-3-yl)methyl phosphate synthase (236 aa).

The Schiff-base intermediate with substrate role is filled by Lys27. Catalysis depends on Lys85, which acts as the Proton acceptor.

This sequence belongs to the MfnB family.

It catalyses the reaction 2 D-glyceraldehyde 3-phosphate = 4-(hydroxymethyl)-2-furancarboxaldehyde phosphate + phosphate + 2 H2O. Its pathway is cofactor biosynthesis; methanofuran biosynthesis. In terms of biological role, catalyzes the formation of 4-(hydroxymethyl)-2-furancarboxaldehyde phosphate (4-HFC-P) from two molecules of glyceraldehyde-3-P (GA-3-P). This is (5-formylfuran-3-yl)methyl phosphate synthase from Methanococcus maripaludis (strain DSM 14266 / JCM 13030 / NBRC 101832 / S2 / LL).